Consider the following 357-residue polypeptide: Peptide chain release factor 1 (357 aa).

At Gln232 the chain carries N5-methylglutamine.

It belongs to the prokaryotic/mitochondrial release factor family. Methylated by PrmC. Methylation increases the termination efficiency of RF1.

It localises to the cytoplasm. Functionally, peptide chain release factor 1 directs the termination of translation in response to the peptide chain termination codons UAG and UAA. This Oleidesulfovibrio alaskensis (strain ATCC BAA-1058 / DSM 17464 / G20) (Desulfovibrio alaskensis) protein is Peptide chain release factor 1.